The following is a 278-amino-acid chain: Glutamate racemase (278 aa).

Substrate contacts are provided by residues 25 to 26 and 57 to 58; these read DS and YG. Cys-89 (proton donor/acceptor) is an active-site residue. A substrate-binding site is contributed by 90–91; that stretch reads NT. The active-site Proton donor/acceptor is Cys-204. 205–206 provides a ligand contact to substrate; sequence TH.

Belongs to the aspartate/glutamate racemases family.

It catalyses the reaction L-glutamate = D-glutamate. It participates in cell wall biogenesis; peptidoglycan biosynthesis. Functionally, provides the (R)-glutamate required for cell wall biosynthesis. The chain is Glutamate racemase from Brucella anthropi (strain ATCC 49188 / DSM 6882 / CCUG 24695 / JCM 21032 / LMG 3331 / NBRC 15819 / NCTC 12168 / Alc 37) (Ochrobactrum anthropi).